The sequence spans 565 residues: Tetratricopeptide repeat protein 39A (565 aa).

3 TPR repeats span residues 271 to 304 (AIFL…QQVW), 461 to 494 (CLIQ…EKKL), and 502 to 535 (PNAL…YKVY).

Belongs to the TTC39 family.

The polypeptide is Tetratricopeptide repeat protein 39A (ttc39a) (Danio rerio (Zebrafish)).